A 120-amino-acid polypeptide reads, in one-letter code: Large ribosomal subunit protein bL20 (120 aa).

The protein belongs to the bacterial ribosomal protein bL20 family.

Binds directly to 23S ribosomal RNA and is necessary for the in vitro assembly process of the 50S ribosomal subunit. It is not involved in the protein synthesizing functions of that subunit. This Desulforudis audaxviator (strain MP104C) protein is Large ribosomal subunit protein bL20.